The sequence spans 271 residues: Vacuolar arginine/histidine antiporter stm1 (271 aa).

The PQ-loop 1 domain maps to 14 to 80 (LTELSSFLGA…GNVSSTVLVL (67 aa)). A run of 3 helical transmembrane segments spans residues 17 to 37 (LSSF…IPQL), 49 to 69 (ISDL…LGSI), and 77 to 97 (VLVL…QIYY). Phosphoserine is present on serine 119. Transmembrane regions (helical) follow at residues 144-164 (FGVM…IISS), 178-198 (PFTA…PQII), 211-231 (IIFF…ILVF), and 245-265 (PWIL…YQFI). The PQ-loop 2 domain maps to 185–239 (SSVLYFCARIPQIIKNHKAKSTEGLSIIFFVLASVGNTSYAFSILVFPASDYLNY).

Belongs to the laat-1 family.

It localises to the vacuole membrane. The catalysed reaction is L-histidine(out) + L-arginine(in) = L-histidine(in) + L-arginine(out). Its function is as follows. Amino acid transporter that moves basic amino acids across the vacuolar membrane. Appears to function as an arginine/histidine antiporter. The chain is Vacuolar arginine/histidine antiporter stm1 (stm1) from Schizosaccharomyces pombe (strain 972 / ATCC 24843) (Fission yeast).